Consider the following 170-residue polypeptide: Flavodoxin (170 aa).

Positions 4-165 constitute a Flavodoxin-like domain; sequence IGLFFGTQTG…RIQAWVAQLK (162 aa).

The protein belongs to the flavodoxin family. FMN serves as cofactor.

Its function is as follows. Low-potential electron donor to a number of redox enzymes. The protein is Flavodoxin (isiB) of Picosynechococcus sp. (strain ATCC 27264 / PCC 7002 / PR-6) (Agmenellum quadruplicatum).